The following is a 269-amino-acid chain: Malonyl-[acyl-carrier protein] O-methyltransferase (269 aa).

It belongs to the methyltransferase superfamily.

It catalyses the reaction malonyl-[ACP] + S-adenosyl-L-methionine = malonyl-[ACP] methyl ester + S-adenosyl-L-homocysteine. It participates in cofactor biosynthesis; biotin biosynthesis. Its function is as follows. Converts the free carboxyl group of a malonyl-thioester to its methyl ester by transfer of a methyl group from S-adenosyl-L-methionine (SAM). It allows to synthesize pimeloyl-ACP via the fatty acid synthetic pathway. In Bacillus anthracis, this protein is Malonyl-[acyl-carrier protein] O-methyltransferase.